A 429-amino-acid chain; its full sequence is MKERTIQPVNNGLNGNITIPGDKSISHRAVMFGSIAEGKTTIKGFLSGADCLSTISCFKEMGVEITQNGDEVTVVGKGLEGLQEPKAVLDVGNSGTTIRLMSGILANTPFFSCVQGDESIAKRPMKRVTNPLKQMGANIDGREEGTFTPLTIRGGDLKAIEYISPVASAQVKSAILLAGLRAEGVTAVTEPHISRDHTERMLEAFGVKVTREGKTVKLSGGQKLTATDIQVPGDVSSAAFFLVAGAIIPNSKLILQNVGMNPTRTGIIDVLEKMGATFTIEPINEGASEPAANITIETSSLKGIEIGGDIIPRLIDEIPVIALAATQAEGITVIRDAHELKVKETNRIDTVVAELTKLGARIEATDDGMIIYGKSALKGNTVNSYGDHRIGMMLAIAGCLAEGKIIIEDAEAVGVSYPTFFDELQKLAK.

Lys23, Ser24, and Arg28 together coordinate 3-phosphoshikimate. A phosphoenolpyruvate-binding site is contributed by Lys23. Phosphoenolpyruvate contacts are provided by Gly95 and Arg123. Residues Ser168, Gln170, Asp316, and Lys343 each contribute to the 3-phosphoshikimate site. A phosphoenolpyruvate-binding site is contributed by Gln170. Asp316 acts as the Proton acceptor in catalysis. Positions 347 and 389 each coordinate phosphoenolpyruvate.

Belongs to the EPSP synthase family. In terms of assembly, monomer.

It is found in the cytoplasm. The enzyme catalyses 3-phosphoshikimate + phosphoenolpyruvate = 5-O-(1-carboxyvinyl)-3-phosphoshikimate + phosphate. Its pathway is metabolic intermediate biosynthesis; chorismate biosynthesis; chorismate from D-erythrose 4-phosphate and phosphoenolpyruvate: step 6/7. Its function is as follows. Catalyzes the transfer of the enolpyruvyl moiety of phosphoenolpyruvate (PEP) to the 5-hydroxyl of shikimate-3-phosphate (S3P) to produce enolpyruvyl shikimate-3-phosphate and inorganic phosphate. The protein is 3-phosphoshikimate 1-carboxyvinyltransferase of Bacillus cereus (strain G9842).